Here is a 644-residue protein sequence, read N- to C-terminus: uncharacterized protein (644 aa).

Position 254-261 (254-261) interacts with ATP; that stretch reads GKMGAGKS.

This is an uncharacterized protein from Bacillus anthracis.